The chain runs to 393 residues: Metal tolerance protein C2 (393 aa).

A disordered region spans residues Met-1–Val-23. At Met-1–Arg-113 the chain is on the cytoplasmic side. The span at Gly-11–Ser-21 shows a compositional bias: basic and acidic residues. A helical transmembrane segment spans residues Leu-114–Phe-134. At Thr-135–Gly-139 the chain is on the vacuolar side. Residues Leu-140–Ala-160 traverse the membrane as a helical segment. Residues Met-161–Thr-186 are Cytoplasmic-facing. Residues Asn-187–Ile-207 traverse the membrane as a helical segment. The Vacuolar portion of the chain corresponds to Gln-208–Lys-214. Residues His-215–Phe-235 form a helical membrane-spanning segment. Topologically, residues Arg-236–His-259 are cytoplasmic. Residues Val-260–Gly-280 form a helical membrane-spanning segment. The Vacuolar portion of the chain corresponds to Val-281–Asn-283. Residues Ala-284–Phe-304 traverse the membrane as a helical segment. The Cytoplasmic segment spans residues Lys-305–Thr-393.

Belongs to the cation diffusion facilitator (CDF) transporter (TC 2.A.4) family.

Its subcellular location is the vacuole membrane. Involved in sequestration of excess metal in the cytoplasm into vacuoles to maintain metal homeostasis. The chain is Metal tolerance protein C2 (MTPC2) from Arabidopsis thaliana (Mouse-ear cress).